The following is a 202-amino-acid chain: MGTSNQPHIVWHEASVSKEERQKRNRLKSCVVWFTGLSGSGKSTLANALDRKLFEEGIHSYVLDGDNIRHGLNAGLGFSEEDRKENIRRIGEVAKLFVDAGVVTSTAFISPFREDRDNVRGILDDGEFIEVYVRCPLETCEKRDPKGLYKKARSGDIPEFTGISSPYEEPVNPELIIDTDQLAVEEAVEKIYAYLHAQESGK.

36-43 contributes to the ATP binding site; it reads GLSGSGKS. Ser110 acts as the Phosphoserine intermediate in catalysis.

The protein belongs to the APS kinase family.

The catalysed reaction is adenosine 5'-phosphosulfate + ATP = 3'-phosphoadenylyl sulfate + ADP + H(+). The protein operates within sulfur metabolism; hydrogen sulfide biosynthesis; sulfite from sulfate: step 2/3. In terms of biological role, catalyzes the synthesis of activated sulfate. In Halalkalibacterium halodurans (strain ATCC BAA-125 / DSM 18197 / FERM 7344 / JCM 9153 / C-125) (Bacillus halodurans), this protein is Probable adenylyl-sulfate kinase.